Here is a 178-residue protein sequence, read N- to C-terminus: MKRERINPETLELEERVVQINRVSKVVKGGRRFSFSTVVVVGDGKGHVGIGMGKAAEVPDAIRKGAEAAKRNLIRVPLVHATVPHEVVTKFAATKVMLRPAAPGTGVIAGRGVRPVVEAAGIKDLLSKVYGSNNPVNVVKATFKALSEMTSLHEMASRRDMTPQELMERRTRRETEAA.

One can recognise an S5 DRBM domain in the interval 13–76 (LEERVVQINR…EAAKRNLIRV (64 aa)). Residues 156 to 178 (ASRRDMTPQELMERRTRRETEAA) are disordered.

The protein belongs to the universal ribosomal protein uS5 family. As to quaternary structure, part of the 30S ribosomal subunit. Contacts proteins S4 and S8.

In terms of biological role, with S4 and S12 plays an important role in translational accuracy. Located at the back of the 30S subunit body where it stabilizes the conformation of the head with respect to the body. The protein is Small ribosomal subunit protein uS5 of Chloroflexus aurantiacus (strain ATCC 29364 / DSM 637 / Y-400-fl).